Here is a 2045-residue protein sequence, read N- to C-terminus: Non-reducing polyketide synthase pks27 (2045 aa).

The segment at 10–247 (IVFGDLTCDS…LTIPIYAPYH (238 aa)) is N-terminal acylcarrier protein transacylase domain (SAT). One can recognise a Ketosynthase family 3 (KS3) domain in the interval 380–813 (HSKLAIIGYS…GGNSSVLIED (434 aa)). Residues cysteine 552, histidine 687, and histidine 731 each act as for beta-ketoacyl synthase activity in the active site. The malonyl-CoA:ACP transacylase (MAT) domain stretch occupies residues 913–1213 (FAFTGQGSQY…VPTLQRNKDT (301 aa)). Positions 1289–1422 (HKLVEEKKDG…ASITFPDAKA (134 aa)) are N-terminal hotdog fold. The PKS/mFAS DH domain occupies 1289–1599 (HKLVEEKKDG…AQGVPRRLMD (311 aa)). Catalysis depends on histidine 1321, which acts as the Proton acceptor; for dehydratase activity. The C-terminal hotdog fold stretch occupies residues 1442–1599 (AARLNTDDRV…AQGVPRRLMD (158 aa)). Catalysis depends on aspartate 1511, which acts as the Proton donor; for dehydratase activity. The disordered stretch occupies residues 1612–1636 (APAGGTLNASQSAAANPAADPSAQA). A compositionally biased stretch (low complexity) spans 1619–1636 (NASQSAAANPAADPSAQA). The Carrier domain maps to 1635–1712 (QADSDNWQAA…ELEAFWKQGA (78 aa)). Residues 1640 to 1709 (NWQAALKIIS…TIKELEAFWK (70 aa)) are product template (PT) domain. O-(pantetheine 4'-phosphoryl)serine is present on serine 1672. The disordered stretch occupies residues 1735-1776 (EAEVDQDKNSSDEDRSSLGTSSYEVISPNTTETTPEITKTSS). The span at 1739-1750 (DQDKNSSDEDRS) shows a compositional bias: basic and acidic residues. Residues 1760–1776 (ISPNTTETTPEITKTSS) show a composition bias toward low complexity. The tract at residues 1798–2039 (TLFLLPDGSG…AKRLSEMIEG (242 aa)) is thioesterase.

Pantetheine 4'-phosphate is required as a cofactor.

The protein operates within secondary metabolite biosynthesis. Non-reducing polyketide synthase (NRPKS); part of the gene cluster 27 that mediates the biosynthesis of asparasone A, a sclerotium-specific anthraquinone pigment important for sclerotial survival. Catalyzes the formation of the aromatic polyketide from acetyl coenzyme A and seven malonyl coenzyme A molecules. Through its product template (PT) domain, catalyzes the cyclization of polyketide backbone via C6-C11 aldolcondensation. The protein is Non-reducing polyketide synthase pks27 of Aspergillus flavus (strain ATCC 200026 / FGSC A1120 / IAM 13836 / NRRL 3357 / JCM 12722 / SRRC 167).